Here is a 256-residue protein sequence, read N- to C-terminus: Trypsin alpha (256 aa).

The signal sequence occupies residues 1–22 (MLKIVILLSAVVCALGGTVPEG). Residues 23–30 (LLPQLDGR) constitute a propeptide, activation peptide. Positions 31-254 (IVGGSATTIS…LRSWVISTAN (224 aa)) constitute a Peptidase S1 domain. A disulfide bond links C56 and C72. Residues H71 and D116 each act as charge relay system in the active site. Cystine bridges form between C180-C197 and C206-C230. The active-site Charge relay system is S210.

It belongs to the peptidase S1 family.

It localises to the secreted. The protein resides in the extracellular space. The enzyme catalyses Preferential cleavage: Arg-|-Xaa, Lys-|-Xaa.. This chain is Trypsin alpha (alphaTry), found in Drosophila erecta (Fruit fly).